Reading from the N-terminus, the 220-residue chain is Ribose-5-phosphate isomerase A (220 aa).

Residues 28–31 (TGST), 81–84 (DGAD), and 94–97 (KGGG) each bind substrate. The active-site Proton acceptor is Glu-103. Lys-121 lines the substrate pocket.

It belongs to the ribose 5-phosphate isomerase family. As to quaternary structure, homodimer.

It catalyses the reaction aldehydo-D-ribose 5-phosphate = D-ribulose 5-phosphate. It participates in carbohydrate degradation; pentose phosphate pathway; D-ribose 5-phosphate from D-ribulose 5-phosphate (non-oxidative stage): step 1/1. Catalyzes the reversible conversion of ribose-5-phosphate to ribulose 5-phosphate. In Leptothrix cholodnii (strain ATCC 51168 / LMG 8142 / SP-6) (Leptothrix discophora (strain SP-6)), this protein is Ribose-5-phosphate isomerase A.